A 127-amino-acid polypeptide reads, in one-letter code: Apolipoprotein C-IV (127 aa).

A signal peptide spans 1–27 (MSLLRNRLQALPALCLCVLVLACIGAC). N63 is a glycosylation site (N-linked (GlcNAc...) asparagine).

The protein belongs to the apolipoprotein C4 family. Expressed by the liver and secreted in plasma.

It localises to the secreted. May participate in lipoprotein metabolism. The sequence is that of Apolipoprotein C-IV (APOC4) from Homo sapiens (Human).